The chain runs to 391 residues: Arginine biosynthesis bifunctional protein ArgJ 2 (391 aa).

Lysine 167 and serine 180 together coordinate substrate. Residue serine 180 is the Nucleophile of the active site.

The protein belongs to the ArgJ family. In terms of assembly, heterotetramer of two alpha and two beta chains.

It localises to the cytoplasm. It carries out the reaction N(2)-acetyl-L-ornithine + L-glutamate = N-acetyl-L-glutamate + L-ornithine. It catalyses the reaction L-glutamate + acetyl-CoA = N-acetyl-L-glutamate + CoA + H(+). It functions in the pathway amino-acid biosynthesis; L-arginine biosynthesis; L-ornithine and N-acetyl-L-glutamate from L-glutamate and N(2)-acetyl-L-ornithine (cyclic): step 1/1. Its pathway is amino-acid biosynthesis; L-arginine biosynthesis; N(2)-acetyl-L-ornithine from L-glutamate: step 1/4. Its function is as follows. Catalyzes two activities which are involved in the cyclic version of arginine biosynthesis: the synthesis of N-acetylglutamate from glutamate and acetyl-CoA as the acetyl donor, and of ornithine by transacetylation between N(2)-acetylornithine and glutamate. The chain is Arginine biosynthesis bifunctional protein ArgJ 2 from Streptomyces clavuligerus.